A 289-amino-acid chain; its full sequence is 4-diphosphocytidyl-2-C-methyl-D-erythritol kinase (289 aa).

The active site involves lysine 10. 94–104 (PVAAGLAGGSS) is a binding site for ATP. The active site involves aspartate 136.

Belongs to the GHMP kinase family. IspE subfamily.

The catalysed reaction is 4-CDP-2-C-methyl-D-erythritol + ATP = 4-CDP-2-C-methyl-D-erythritol 2-phosphate + ADP + H(+). The protein operates within isoprenoid biosynthesis; isopentenyl diphosphate biosynthesis via DXP pathway; isopentenyl diphosphate from 1-deoxy-D-xylulose 5-phosphate: step 3/6. In terms of biological role, catalyzes the phosphorylation of the position 2 hydroxy group of 4-diphosphocytidyl-2C-methyl-D-erythritol. The sequence is that of 4-diphosphocytidyl-2-C-methyl-D-erythritol kinase from Bacillus velezensis (strain DSM 23117 / BGSC 10A6 / LMG 26770 / FZB42) (Bacillus amyloliquefaciens subsp. plantarum).